Consider the following 196-residue polypeptide: Molybdenum cofactor guanylyltransferase (196 aa).

GTP contacts are provided by residues 10 to 12, lysine 23, asparagine 51, aspartate 69, and aspartate 99; that span reads LAG. Mg(2+) is bound at residue aspartate 99.

This sequence belongs to the MobA family. As to quaternary structure, monomer. It depends on Mg(2+) as a cofactor.

Its subcellular location is the cytoplasm. The enzyme catalyses Mo-molybdopterin + GTP + H(+) = Mo-molybdopterin guanine dinucleotide + diphosphate. Its function is as follows. Transfers a GMP moiety from GTP to Mo-molybdopterin (Mo-MPT) cofactor (Moco or molybdenum cofactor) to form Mo-molybdopterin guanine dinucleotide (Mo-MGD) cofactor. This Shewanella loihica (strain ATCC BAA-1088 / PV-4) protein is Molybdenum cofactor guanylyltransferase.